The sequence spans 211 residues: Protein-L-isoaspartate O-methyltransferase (211 aa).

The active site involves Ser62.

Belongs to the methyltransferase superfamily. L-isoaspartyl/D-aspartyl protein methyltransferase family.

Its subcellular location is the cytoplasm. It catalyses the reaction [protein]-L-isoaspartate + S-adenosyl-L-methionine = [protein]-L-isoaspartate alpha-methyl ester + S-adenosyl-L-homocysteine. Catalyzes the methyl esterification of L-isoaspartyl residues in peptides and proteins that result from spontaneous decomposition of normal L-aspartyl and L-asparaginyl residues. It plays a role in the repair and/or degradation of damaged proteins. This is Protein-L-isoaspartate O-methyltransferase from Shewanella amazonensis (strain ATCC BAA-1098 / SB2B).